The chain runs to 309 residues: Cytochrome c biogenesis protein CcsA (309 aa).

8 helical membrane-spanning segments follow: residues 18 to 38 (LGLLVFYFLLINLPISLGAVF), 48 to 68 (LITILVNLLITLQLLFRWSIS), 73 to 93 (ISNLYESLYFLTWGITLGQLL), 102 to 122 (IIPSIAIPIELLTVAFACFVL), 148 to 168 (VMLSYAALIIGSLLSMSVLFI), 216 to 236 (SILVGFVLLTLGLISGAVWAN), 250 to 267 (TWAFISWLFYAAYLHMRI), and 279 to 299 (LASTGFLVVLVCYLGVNFLGI).

Belongs to the CcmF/CycK/Ccl1/NrfE/CcsA family. As to quaternary structure, may interact with ccs1.

The protein localises to the cellular thylakoid membrane. Functionally, required during biogenesis of c-type cytochromes (cytochrome c6 and cytochrome f) at the step of heme attachment. The sequence is that of Cytochrome c biogenesis protein CcsA from Prochlorococcus marinus (strain AS9601).